A 609-amino-acid chain; its full sequence is uncharacterized protein (609 aa).

The protein belongs to the NodU/CmcH family.

This is an uncharacterized protein from Methanocaldococcus jannaschii (strain ATCC 43067 / DSM 2661 / JAL-1 / JCM 10045 / NBRC 100440) (Methanococcus jannaschii).